A 136-amino-acid chain; its full sequence is Ribosome-binding factor A (136 aa).

This sequence belongs to the RbfA family. Monomer. Binds 30S ribosomal subunits, but not 50S ribosomal subunits or 70S ribosomes.

Its subcellular location is the cytoplasm. In terms of biological role, one of several proteins that assist in the late maturation steps of the functional core of the 30S ribosomal subunit. Associates with free 30S ribosomal subunits (but not with 30S subunits that are part of 70S ribosomes or polysomes). Required for efficient processing of 16S rRNA. May interact with the 5'-terminal helix region of 16S rRNA. This chain is Ribosome-binding factor A, found in Rhizobium etli (strain ATCC 51251 / DSM 11541 / JCM 21823 / NBRC 15573 / CFN 42).